A 279-amino-acid chain; its full sequence is MSIVSLLGIKVLNNPAKFTDPYEFEITFECLESLKHDLEWKLTYVGSSRSLDHDQELDSILVGPVPVGVNKFVFSADPPSAELIPASELVSVTVILLSCSYDGREFVRVGYYVNNEYDEEELRENPPAKVQVDHIVRNILAEKPRVTRFNIVWDNENEGDLYPPEQPGVDDEEEEDDEEEDDDEDDEDDEDDDQEDGEGEAEEAAEEEEEEEEKTEDNETNLEEEEEDIENSDGDEEEGEEEVGSVDKNEDGNDKKRRKIEGGSTDIESTPKDAARSTN.

An interaction with HIR1 region spans residues 1–143 (MSIVSLLGIK…HIVRNILAEK (143 aa)). Positions 1–155 (MSIVSLLGIK…VTRFNIVWDN (155 aa)) are interaction with histone H3, histone H4, RAD53 and the RF-C complex. Residues 156 to 279 (ENEGDLYPPE…TPKDAARSTN (124 aa)) form a disordered region. Over residues 168–244 (GVDDEEEEDD…DEEEGEEEVG (77 aa)) the composition is skewed to acidic residues. Residues 192-243 (DDQEDGEGEAEEAAEEEEEEEEKTEDNETNLEEEEEDIENSDGDEEEGEEEV) are a coiled coil. Composition is skewed to basic and acidic residues over residues 245 to 254 (SVDKNEDGND) and 269 to 279 (STPKDAARSTN).

It belongs to the ASF1 family. As to quaternary structure, interacts with histone H3/H4 heterodimers via both histone H3 and histone H4. Binds with higher affinity to H3/H4 heterodimers where histone H3 has been pre-acetylated on 'Lys-14'. Interacts with RAD53 and this may impair interaction with histones and chromatin assembly; the interaction is reduced upon activation of DNA damage or replication checkpoints which in turn promotes histone binding and chromatin assembly. Interacts with the CAC2 subunit of chromatin assembly factor 1 (CAF-1). Interacts with the HIR1, HIR2, HIR3 and HPC2 subunits of the HIR complex. Interacts with the RFC1, RFC2, RFC3, RFC4 and RFC5 subunits of the replication factor C (RF-C/RFC) complex; which may recruit this protein to DNA. Interacts with the SAS2, SAS4 and SAS5 subunits of the SAS/SAS-I complex. Interacts with the BDF1, BDF2, SPT15, TAF1 and TAF7 subunits of the TFIID complex. Interacts with RTT109 and VPS75; the interaction with RTT109 is direct.

The protein resides in the nucleus. In terms of biological role, histone chaperone that facilitates histone deposition and histone exchange and removal during nucleosome assembly and disassembly. Facilitates histone deposition through both replication-dependent and replication-independent chromatin assembly pathways. Cooperates with chromatin assembly factor 1 (CAF-1) to promote replication-dependent chromatin assembly and with the HIR complex to promote replication-independent chromatin assembly, which may occur during transcription and DNA repair. May be required for the maintenance of a subset of replication elongation factors, including DNA polymerase epsilon, the RFC complex and PCNA, at stalled replication forks. Also required for RTT109-dependent acetylation of histone H3 on 'Lys-9' and 'Lys-56'. Promotion of RTT109-mediated histone H3 'Lys-56' acetylation is dependent on interactions with histone H3 pre-acetylated on 'Lys-14'. This is Histone chaperone ASF1 from Saccharomyces cerevisiae (strain ATCC 204508 / S288c) (Baker's yeast).